The sequence spans 751 residues: WD repeat-containing protein 91 (751 aa).

Residues 183–205 (QKIACLQEENEIMRQKLFALQAE) are a coiled coil. Residues 237–398 (ELGSNIMSSH…GARKEEKPAQ (162 aa)) are disordered. Residues 238–267 (LGSNIMSSHSNTNMNTPSQRTSGFLSSLLA) show a composition bias toward polar residues. Positions 356 to 373 (TEKKAENSDADPDLRSDT) are enriched in basic and acidic residues. 7 WD repeats span residues 410–449 (EHHS…QTKA), 452–492 (ISKS…NLCE), 517–559 (SAAA…QQLQ), 564–603 (PVPI…CALS), 606–645 (AHMG…QKVS), 668–706 (VQFP…STLE), and 713–751 (GHRA…AQKS).

Belongs to the WD repeat WDR91 family.

It is found in the early endosome membrane. The protein localises to the late endosome membrane. In terms of biological role, functions as a negative regulator of the PI3 kinase/PI3K activity associated with endosomal membranes. By modifying the phosphatidylinositol 3-phosphate/PtdInsP3 content of endosomal membranes may regulate endosome fusion, recycling, sorting and early to late endosome transport. This chain is WD repeat-containing protein 91, found in Xenopus tropicalis (Western clawed frog).